A 615-amino-acid polypeptide reads, in one-letter code: Zinc finger protein 653 (615 aa).

4 disordered regions span residues 1-48 (MAER…ARRR), 95-117 (RSGR…KRRR), 176-236 (PLSD…SSGL), and 401-432 (EEKE…ELDG). The Nuclear localization signal motif lies at 107 to 118 (PKKPKRKKRRRR). Residues 108–117 (KKPKRKKRRR) are compositionally biased toward basic residues. The span at 193–205 (AGSSDSSSSGSAS) shows a compositional bias: low complexity. The segment covering 226-236 (TPTSPVGSSGL) has biased composition (polar residues). The segment covering 419-432 (AEPEAEADGEELDG) has biased composition (acidic residues). Residues 445–451 (EPEKRRR) carry the Nuclear localization signal motif. C2H2-type zinc fingers lie at residues 467–492 (FHCP…NLVH), 498–522 (KVCP…MIIH), 528–550 (FTCE…RRTH), 556–578 (LQCE…MKKH), and 586–609 (FTCD…LKSH).

This sequence belongs to the krueppel C2H2-type zinc-finger protein family. Interacts with NR5A1. As to expression, highly expressed in testis, cerebellum, temporal lobe, hippocampus and the adrenal gland. Moderately expressed in spleen, uterus, thymus, pancreas, kidney, stomach and rectum.

The protein localises to the nucleus. In terms of biological role, transcriptional repressor. May repress NR5A1, PPARG, NR1H3, NR4A2, ESR1 and NR3C1 transcriptional activity. This Homo sapiens (Human) protein is Zinc finger protein 653 (ZNF653).